The primary structure comprises 161 residues: 3-hydroxyacyl-[acyl-carrier-protein] dehydratase FabZ (161 aa).

The active site involves His64.

The protein belongs to the thioester dehydratase family. FabZ subfamily.

It is found in the cytoplasm. It catalyses the reaction a (3R)-hydroxyacyl-[ACP] = a (2E)-enoyl-[ACP] + H2O. In terms of biological role, involved in unsaturated fatty acids biosynthesis. Catalyzes the dehydration of short chain beta-hydroxyacyl-ACPs and long chain saturated and unsaturated beta-hydroxyacyl-ACPs. In Paramagnetospirillum magneticum (strain ATCC 700264 / AMB-1) (Magnetospirillum magneticum), this protein is 3-hydroxyacyl-[acyl-carrier-protein] dehydratase FabZ.